Consider the following 216-residue polypeptide: Ras-like protein rasW (216 aa).

16 to 23 (GDGGVGKT) contacts GTP. The Effector region motif lies at 38–46 (YDPTIEDSY). GTP is bound by residues 63 to 67 (DTAGQ) and 122 to 125 (NKID). The tract at residues 171-193 (KRKEDPQSHKPSKDSDSKKPLVN) is disordered. Basic and acidic residues predominate over residues 172–189 (RKEDPQSHKPSKDSDSKK). Cysteine 213 carries the post-translational modification Cysteine methyl ester. Residue cysteine 213 is the site of S-geranylgeranyl cysteine attachment. Positions 214 to 216 (KMM) are cleaved as a propeptide — removed in mature form.

This sequence belongs to the small GTPase superfamily. Ras family.

The protein localises to the cell membrane. The enzyme catalyses GTP + H2O = GDP + phosphate + H(+). Its function is as follows. Ras proteins bind GDP/GTP and possess intrinsic GTPase activity. This Dictyostelium discoideum (Social amoeba) protein is Ras-like protein rasW (rasW).